Consider the following 388-residue polypeptide: Glucose-6-phosphate/phosphate translocator 1, chloroplastic (388 aa).

A chloroplast-targeting transit peptide spans 1-65; sequence MVLSVKQTLS…LRAKSPVVRC (65 aa). 8 helical membrane-spanning segments follow: residues 95–115, 129–149, 158–178, 211–231, 233–253, 273–293, 305–325, and 363–383; these read LKIG…NIYN, STLS…VGIV, FWKT…AATV, FPTS…LSAL, ELNF…AFVF, YACL…AVEG, LATV…FYHL, and TPVQ…TFLY. The region spanning 112 to 229 is the EamA domain; the sequence is NIYNKKVLNA…IPIIGGCALS (118 aa).

It belongs to the TPT transporter family. GPT (TC 2.A.7.9) subfamily. Expressed in seeds, flowers, rosette leaves, and roots, with highest levels found in stamens. Found in the root cap, in guard cells and in mesophyll cells.

The protein localises to the plastid. It localises to the chloroplast membrane. Its subcellular location is the endoplasmic reticulum membrane. It is found in the peroxisome membrane. In terms of biological role, glucose 6-phosphate (Glc6P) transporter. Also transports inorganic phosphate, 3-phosphoglycerate, triose phosphates and, to a leser extent, phosphoenolpyruvate. Responsible for the transport of Glc6P into plastids of heterotrophic tissues where it can be used as a carbon source for starch biosynthesis, as substrate for fatty acid biosynthesis or as substrate for NADPH generation via the oxidative pentose phosphate pathway (OPPP). Required for pollen maturation and embryo sac development. Preferentially exchanges Glc6P for ribulose-5-phosphate (Ru5P) in reconstituted yeast proteoliposomes. May supply the substrate (Glc6P) for OPPP reactions inside peroxisomes and exchange it with the product Ru5P which leaves the organelle. This Arabidopsis thaliana (Mouse-ear cress) protein is Glucose-6-phosphate/phosphate translocator 1, chloroplastic.